We begin with the raw amino-acid sequence, 501 residues long: Aldehyde dehydrogenase 1A1 (501 aa).

Serine 2 carries the post-translational modification N-acetylserine. 2 positions are modified to N6-acetyllysine: lysine 91 and lysine 128. NAD(+) is bound by residues 167–170 (IPWN), 193–196 (KPAE), 226–227 (GP), and 246–247 (GS). At lysine 252 the chain carries N6-acetyllysine. Catalysis depends on glutamate 269, which acts as the Proton acceptor. 269-271 (ELG) provides a ligand contact to NAD(+). Catalysis depends on cysteine 303, which acts as the Nucleophile. The mediates interaction with PRMT3 stretch occupies residues 336–501 (LTPGVSQGPQ…VTIKISQKNS (166 aa)). The residue at position 337 (threonine 337) is a Phosphothreonine. 349 to 353 (EQYEK) is a binding site for NAD(+). N6-acetyllysine is present on residues lysine 353 and lysine 367. NAD(+) is bound at residue 400 to 402 (EIF). Lysine 410 is subject to N6-acetyllysine. Serine 413 bears the Phosphoserine mark. N6-acetyllysine is present on residues lysine 419 and lysine 495.

It belongs to the aldehyde dehydrogenase family. In terms of assembly, homotetramer. Interacts with PRMT3; the interaction is direct, inhibits ALDH1A1 aldehyde dehydrogenase activity and is independent of the methyltransferase activity of PRMT3. Post-translationally, the N-terminus is blocked most probably by acetylation.

The protein localises to the cytoplasm. It is found in the cytosol. It localises to the cell projection. The protein resides in the axon. The catalysed reaction is an aldehyde + NAD(+) + H2O = a carboxylate + NADH + 2 H(+). The enzyme catalyses all-trans-retinal + NAD(+) + H2O = all-trans-retinoate + NADH + 2 H(+). It catalyses the reaction 9-cis-retinal + NAD(+) + H2O = 9-cis-retinoate + NADH + 2 H(+). It carries out the reaction 11-cis-retinal + NAD(+) + H2O = 11-cis-retinoate + NADH + 2 H(+). The catalysed reaction is 13-cis-retinal + NAD(+) + H2O = 13-cis-retinoate + NADH + 2 H(+). The enzyme catalyses 3-deoxyglucosone + NAD(+) + H2O = 2-dehydro-3-deoxy-D-gluconate + NADH + 2 H(+). It catalyses the reaction (E)-4-hydroxynon-2-enal + NAD(+) + H2O = (E)-4-hydroxynon-2-enoate + NADH + 2 H(+). It carries out the reaction malonaldehyde + NAD(+) + H2O = 3-oxopropanoate + NADH + 2 H(+). The catalysed reaction is hexanal + NAD(+) + H2O = hexanoate + NADH + 2 H(+). The enzyme catalyses propanal + NAD(+) + H2O = propanoate + NADH + 2 H(+). It catalyses the reaction acetaldehyde + NAD(+) + H2O = acetate + NADH + 2 H(+). It carries out the reaction benzaldehyde + NAD(+) + H2O = benzoate + NADH + 2 H(+). The catalysed reaction is 4-aminobutanal + NAD(+) + H2O = 4-aminobutanoate + NADH + 2 H(+). It participates in cofactor metabolism; retinol metabolism. With respect to regulation, inhibited by duocarmycin analogs. Functionally, cytosolic dehydrogenase that catalyzes the irreversible oxidation of a wide range of aldehydes to their corresponding carboxylic acid. Functions downstream of retinol dehydrogenases and catalyzes the oxidation of retinaldehyde into retinoic acid, the second step in the oxidation of retinol/vitamin A into retinoic acid. This pathway is crucial to control the levels of retinol and retinoic acid, two important molecules which excess can be teratogenic and cytotoxic. Also oxidizes aldehydes resulting from lipid peroxidation like (E)-4-hydroxynon-2-enal/HNE, malonaldehyde and hexanal that form protein adducts and are highly cytotoxic. By participating for instance to the clearance of (E)-4-hydroxynon-2-enal/HNE in the lens epithelium prevents the formation of HNE-protein adducts and lens opacification. Also functions downstream of fructosamine-3-kinase in the fructosamine degradation pathway by catalyzing the oxidation of 3-deoxyglucosone, the carbohydrate product of fructosamine 3-phosphate decomposition, which is itself a potent glycating agent that may react with lysine and arginine side-chains of proteins. Also has an aminobutyraldehyde dehydrogenase activity and is probably part of an alternative pathway for the biosynthesis of GABA/4-aminobutanoate in midbrain, thereby playing a role in GABAergic synaptic transmission. The sequence is that of Aldehyde dehydrogenase 1A1 from Ovis aries (Sheep).